The primary structure comprises 792 residues: DNA ligase (792 aa).

NAD(+)-binding positions include 42–46, 91–92, and glutamate 124; these read DAEYD and SL. Residue lysine 126 is the N6-AMP-lysine intermediate of the active site. NAD(+) is bound by residues arginine 147, glutamate 189, lysine 306, and lysine 330. Residues cysteine 424, cysteine 426, cysteine 448, and cysteine 454 each contribute to the Zn(2+) site. A BRCT domain is found at 714-792; the sequence is KTDTAVAGKT…EDEWLAMVGG (79 aa).

This sequence belongs to the NAD-dependent DNA ligase family. LigA subfamily. The cofactor is Mg(2+). It depends on Mn(2+) as a cofactor.

It carries out the reaction NAD(+) + (deoxyribonucleotide)n-3'-hydroxyl + 5'-phospho-(deoxyribonucleotide)m = (deoxyribonucleotide)n+m + AMP + beta-nicotinamide D-nucleotide.. DNA ligase that catalyzes the formation of phosphodiester linkages between 5'-phosphoryl and 3'-hydroxyl groups in double-stranded DNA using NAD as a coenzyme and as the energy source for the reaction. It is essential for DNA replication and repair of damaged DNA. The protein is DNA ligase of Caulobacter sp. (strain K31).